A 497-amino-acid chain; its full sequence is Acetyl-coenzyme A carboxylase carboxyl transferase subunit beta, chloroplastic (497 aa).

Positions 230 to 497 (LWIQCENCYG…FFPLNQNSIK (268 aa)) constitute a CoA carboxyltransferase N-terminal domain. Residues cysteine 234, cysteine 237, cysteine 253, and cysteine 256 each coordinate Zn(2+). The segment at 234–256 (CENCYGLNYKKFFRSKMNICEQC) adopts a C4-type zinc-finger fold.

It belongs to the AccD/PCCB family. As to quaternary structure, acetyl-CoA carboxylase is a heterohexamer composed of biotin carboxyl carrier protein, biotin carboxylase and 2 subunits each of ACCase subunit alpha and ACCase plastid-coded subunit beta (accD). Zn(2+) serves as cofactor.

Its subcellular location is the plastid. It is found in the chloroplast stroma. The catalysed reaction is N(6)-carboxybiotinyl-L-lysyl-[protein] + acetyl-CoA = N(6)-biotinyl-L-lysyl-[protein] + malonyl-CoA. Its pathway is lipid metabolism; malonyl-CoA biosynthesis; malonyl-CoA from acetyl-CoA: step 1/1. In terms of biological role, component of the acetyl coenzyme A carboxylase (ACC) complex. Biotin carboxylase (BC) catalyzes the carboxylation of biotin on its carrier protein (BCCP) and then the CO(2) group is transferred by the transcarboxylase to acetyl-CoA to form malonyl-CoA. The polypeptide is Acetyl-coenzyme A carboxylase carboxyl transferase subunit beta, chloroplastic (Platanus occidentalis (Sycamore)).